Here is a 71-residue protein sequence, read N- to C-terminus: Probable ribosome maturation protein RlbA (71 aa).

The S4 RNA-binding domain occupies 12–69 (ITLGQFLKLADVIQSGGMAKWFLSEHEVLVNDEPDNRRGRKLYVGDVVEIEGFGSFQV).

May assist in the assembly of the 50S subunit. The chain is Probable ribosome maturation protein RlbA from Bacillus subtilis (strain 168).